Here is a 739-residue protein sequence, read N- to C-terminus: Eukaryotic translation initiation factor 3 subunit B (739 aa).

The interval 1–98 is sufficient for interaction with HCR1 and TIF32; it reads MSINEEDYLQ…LFIQFKSTES (98 aa). The sufficient for interaction with PIC8 stretch occupies residues 1–224; sequence MSINEEDYLQ…GIQSWGGANF (224 aa). An RRM domain is found at 37–124; sequence NYIIVDGAPI…HRLLVNKLSD (88 aa). 7 WD repeats span residues 190 to 229, 231 to 293, 301 to 339, 343 to 385, 453 to 502, 537 to 579, and 592 to 630; these read PRKGFTSKYAKFSPKGTYLFSIHPQGIQSWGGANFNSIKR, FHQQ…RTFA, QKEMPWPLVKWSYDDKYCARQGPDALAIYETESNFQLLD, VKVD…QTAR, ELKD…KGGV, IENK…ETNK, and DKFSGMTNISWDPSGRFVAAWSTSWLHAIENGYRLYEFT.

The protein belongs to the eIF-3 subunit B family. Component of the eukaryotic translation initiation factor 3 (eIF-3) complex.

It is found in the cytoplasm. In terms of biological role, RNA-binding component of the eukaryotic translation initiation factor 3 (eIF-3) complex, which is involved in protein synthesis of a specialized repertoire of mRNAs and, together with other initiation factors, stimulates binding of mRNA and methionyl-tRNAi to the 40S ribosome. The eIF-3 complex specifically targets and initiates translation of a subset of mRNAs involved in cell proliferation. This Candida albicans (strain SC5314 / ATCC MYA-2876) (Yeast) protein is Eukaryotic translation initiation factor 3 subunit B.